Here is a 433-residue protein sequence, read N- to C-terminus: Enolase (433 aa).

The residue at position 1 (serine 1) is an N-acetylserine. (2R)-2-phosphoglycerate contacts are provided by serine 36 and histidine 157. The Proton donor role is filled by glutamate 209. Residues aspartate 244, glutamate 294, and aspartate 319 each contribute to the Mn(2+) site. (2R)-2-phosphoglycerate contacts are provided by lysine 344, arginine 373, and serine 374. The active-site Proton acceptor is the lysine 344.

Belongs to the enolase family. Homodimer. Mg(2+) is required as a cofactor.

It localises to the cytoplasm. It carries out the reaction (2R)-2-phosphoglycerate = phosphoenolpyruvate + H2O. It participates in carbohydrate degradation; glycolysis; pyruvate from D-glyceraldehyde 3-phosphate: step 4/5. With respect to regulation, inhibited by 2-phosphoglycolic acid. In Homarus gammarus (European lobster), this protein is Enolase.